The sequence spans 138 residues: ATP synthase epsilon chain (138 aa).

Belongs to the ATPase epsilon chain family. F-type ATPases have 2 components, CF(1) - the catalytic core - and CF(0) - the membrane proton channel. CF(1) has five subunits: alpha(3), beta(3), gamma(1), delta(1), epsilon(1). CF(0) has three main subunits: a, b and c.

It localises to the cell inner membrane. Its function is as follows. Produces ATP from ADP in the presence of a proton gradient across the membrane. The protein is ATP synthase epsilon chain of Vesicomyosocius okutanii subsp. Calyptogena okutanii (strain HA).